We begin with the raw amino-acid sequence, 633 residues long: Glutamyl-tRNA(Gln) amidotransferase subunit E (633 aa).

Belongs to the GatB/GatE family. GatE subfamily. As to quaternary structure, heterodimer of GatD and GatE.

It catalyses the reaction L-glutamyl-tRNA(Gln) + L-glutamine + ATP + H2O = L-glutaminyl-tRNA(Gln) + L-glutamate + ADP + phosphate + H(+). In terms of biological role, allows the formation of correctly charged Gln-tRNA(Gln) through the transamidation of misacylated Glu-tRNA(Gln) in organisms which lack glutaminyl-tRNA synthetase. The reaction takes place in the presence of glutamine and ATP through an activated gamma-phospho-Glu-tRNA(Gln). The GatDE system is specific for glutamate and does not act on aspartate. This is Glutamyl-tRNA(Gln) amidotransferase subunit E from Methanococcus vannielii (strain ATCC 35089 / DSM 1224 / JCM 13029 / OCM 148 / SB).